A 479-amino-acid chain; its full sequence is Adenosylhomocysteinase (479 aa).

Residues threonine 65, aspartate 145, and glutamate 205 each coordinate substrate. An NAD(+)-binding site is contributed by 206-208; sequence TTT. Residues lysine 235 and aspartate 239 each contribute to the substrate site. Residues asparagine 240, 269–274, glutamate 292, asparagine 327, 348–350, and asparagine 393 each bind NAD(+); these read GYGDVG and IGH.

The protein belongs to the adenosylhomocysteinase family. It depends on NAD(+) as a cofactor.

It is found in the cytoplasm. The catalysed reaction is S-adenosyl-L-homocysteine + H2O = L-homocysteine + adenosine. Its pathway is amino-acid biosynthesis; L-homocysteine biosynthesis; L-homocysteine from S-adenosyl-L-homocysteine: step 1/1. Its function is as follows. May play a key role in the regulation of the intracellular concentration of adenosylhomocysteine. This is Adenosylhomocysteinase from Janthinobacterium sp. (strain Marseille) (Minibacterium massiliensis).